The following is a 149-amino-acid chain: Large ribosomal subunit protein bL9 (149 aa).

The protein belongs to the bacterial ribosomal protein bL9 family.

Functionally, binds to the 23S rRNA. The sequence is that of Large ribosomal subunit protein bL9 from Christiangramia forsetii (strain DSM 17595 / CGMCC 1.15422 / KT0803) (Gramella forsetii).